Here is an 87-residue protein sequence, read N- to C-terminus: Putative defensin-like protein 169 (87 aa).

Residues 1–21 form the signal peptide; it reads MKKTFSFTVLILFVIPLLVTG. 4 disulfide bridges follow: Cys36-Cys86, Cys48-Cys74, Cys53-Cys80, and Cys57-Cys82.

Belongs to the DEFL family.

Its subcellular location is the secreted. The sequence is that of Putative defensin-like protein 169 from Arabidopsis thaliana (Mouse-ear cress).